Reading from the N-terminus, the 417-residue chain is Peptidyl-Asp metalloendopeptidase (417 aa).

The first 23 residues, 1–23 (MKSKSMCTTVGLIAMCLAGSAAA), serve as a signal peptide directing secretion. Zn(2+) is bound at residue H331. E332 is a catalytic residue. The Zn(2+) site is built by H335 and H341.

This sequence belongs to the peptidase M72 family. Requires Zn(2+) as cofactor.

The catalysed reaction is Cleavage of Xaa-|-Asp, Xaa-|-Glu and Xaa-|-cysteic acid bonds.. Metalloprotease, specifically cleaves on the N-terminal side of aspartyl, glutamyl and cysteic acid residues. The chain is Peptidyl-Asp metalloendopeptidase from Xanthomonas campestris pv. campestris (strain ATCC 33913 / DSM 3586 / NCPPB 528 / LMG 568 / P 25).